The following is a 282-amino-acid chain: Undecaprenyl-diphosphatase (282 aa).

The next 6 helical transmembrane spans lie at 51-71 (TLVA…AAVI), 87-107 (MGWM…LFET), 115-135 (SLYW…LAEG), 191-211 (ATAA…AGLY), 229-249 (NILV…AFLL), and 259-279 (IFIA…ATGV).

Belongs to the UppP family.

It localises to the cell inner membrane. The catalysed reaction is di-trans,octa-cis-undecaprenyl diphosphate + H2O = di-trans,octa-cis-undecaprenyl phosphate + phosphate + H(+). Catalyzes the dephosphorylation of undecaprenyl diphosphate (UPP). Confers resistance to bacitracin. This is Undecaprenyl-diphosphatase from Pelodictyon phaeoclathratiforme (strain DSM 5477 / BU-1).